The following is a 445-amino-acid chain: CBL-interacting serine/threonine-protein kinase 5 (445 aa).

The Protein kinase domain maps to 12–267 (YEMGRLLGKG…IPAIMRTPWL (256 aa)). ATP-binding positions include 18–26 (LGKGTFAKV) and Lys-41. The Proton acceptor role is filled by Asp-135. Positions 153–182 (DFGLSALPEQILQDGLLHTQCGTPAYVAPE) are activation loop. At Ser-157 the chain carries Phosphoserine. A Phosphothreonine modification is found at Thr-171. Residues 307–332 (ISPKFFNAFEFISSMSSGFDLSSLFE) form the NAF domain. The interval 336–366 (KVQSVFTSRSSATEVMEKIETVTKEMNMKVK) is PPI.

The protein belongs to the protein kinase superfamily. CAMK Ser/Thr protein kinase family. SNF1 subfamily. Requires Mn(2+) as cofactor.

The enzyme catalyses L-seryl-[protein] + ATP = O-phospho-L-seryl-[protein] + ADP + H(+). It carries out the reaction L-threonyl-[protein] + ATP = O-phospho-L-threonyl-[protein] + ADP + H(+). Functionally, CIPK serine-threonine protein kinases interact with CBL proteins. Binding of a CBL protein to the regulatory NAF domain of CIPK protein lead to the activation of the kinase in a calcium-dependent manner. This Arabidopsis thaliana (Mouse-ear cress) protein is CBL-interacting serine/threonine-protein kinase 5 (CIPK5).